A 327-amino-acid polypeptide reads, in one-letter code: tRNA(Ile)-lysidine synthase (327 aa).

32 to 37 (SGGQDS) provides a ligand contact to ATP.

It belongs to the tRNA(Ile)-lysidine synthase family.

It is found in the cytoplasm. It carries out the reaction cytidine(34) in tRNA(Ile2) + L-lysine + ATP = lysidine(34) in tRNA(Ile2) + AMP + diphosphate + H(+). Its function is as follows. Ligates lysine onto the cytidine present at position 34 of the AUA codon-specific tRNA(Ile) that contains the anticodon CAU, in an ATP-dependent manner. Cytidine is converted to lysidine, thus changing the amino acid specificity of the tRNA from methionine to isoleucine. The polypeptide is tRNA(Ile)-lysidine synthase (Synechococcus sp. (strain JA-2-3B'a(2-13)) (Cyanobacteria bacterium Yellowstone B-Prime)).